Reading from the N-terminus, the 100-residue chain is UPF0235 protein TC_0667 (100 aa).

This sequence belongs to the UPF0235 family.

This is UPF0235 protein TC_0667 from Chlamydia muridarum (strain MoPn / Nigg).